A 414-amino-acid chain; its full sequence is GA-binding protein subunit beta-2 (414 aa).

5 ANK repeats span residues D5–T34, L37–A66, V70–A99, L103–A132, and F136–T166. S218 carries the phosphoserine modification. Positions E310–N362 form a coiled coil.

In terms of assembly, heterotetramer of two alpha and two beta subunits. The C-terminal is necessary for the formation of a heterotetrameric GABP-alpha-2/beta-2 complex, and also facilitates homotypic dimerization. Interacts with ADGRB2. In terms of tissue distribution, high levels in thymus, spleen, kidney and intestine.

Its subcellular location is the nucleus. Transcription factor capable of interacting with purine rich repeats (GA repeats). Must associate with GABP-alpha to bind DNA. This is GA-binding protein subunit beta-2 (Gabpb2) from Mus musculus (Mouse).